The sequence spans 195 residues: MKAFRVHTGIVAPLVRPNVDTDQIIPKQFLKRIERTGFGPFLFFDWRFDEAGNPKSDFVLNQSGYKGASILVGGKNFGCGSSREHAPWAIEDFGFRVVIAPTFADIFHNNCRNSGVLAIVTSQENVDAIAARAEKNPGYQLTVDLEKGTISGADGLSIDFEVDGFTRRCFLEGLDDIGLTLRHADAIADYEKAHA.

The protein belongs to the LeuD family. LeuD type 1 subfamily. Heterodimer of LeuC and LeuD.

It catalyses the reaction (2R,3S)-3-isopropylmalate = (2S)-2-isopropylmalate. The protein operates within amino-acid biosynthesis; L-leucine biosynthesis; L-leucine from 3-methyl-2-oxobutanoate: step 2/4. Catalyzes the isomerization between 2-isopropylmalate and 3-isopropylmalate, via the formation of 2-isopropylmaleate. The protein is 3-isopropylmalate dehydratase small subunit of Koribacter versatilis (strain Ellin345).